A 630-amino-acid chain; its full sequence is 1-deoxy-D-xylulose-5-phosphate synthase (630 aa).

Residues histidine 72 and 113 to 115 each bind thiamine diphosphate; that span reads GHS. A Mg(2+)-binding site is contributed by aspartate 144. Residues 145-146, asparagine 173, tyrosine 284, and glutamate 367 each bind thiamine diphosphate; that span reads GA. Asparagine 173 contacts Mg(2+).

The protein belongs to the transketolase family. DXPS subfamily. In terms of assembly, homodimer. The cofactor is Mg(2+). Thiamine diphosphate is required as a cofactor.

It carries out the reaction D-glyceraldehyde 3-phosphate + pyruvate + H(+) = 1-deoxy-D-xylulose 5-phosphate + CO2. The protein operates within metabolic intermediate biosynthesis; 1-deoxy-D-xylulose 5-phosphate biosynthesis; 1-deoxy-D-xylulose 5-phosphate from D-glyceraldehyde 3-phosphate and pyruvate: step 1/1. Catalyzes the acyloin condensation reaction between C atoms 2 and 3 of pyruvate and glyceraldehyde 3-phosphate to yield 1-deoxy-D-xylulose-5-phosphate (DXP). The chain is 1-deoxy-D-xylulose-5-phosphate synthase from Bacillus cereus (strain ATCC 10987 / NRS 248).